A 191-amino-acid chain; its full sequence is Probable calcium-binding protein CML8 (191 aa).

The segment at 1–41 (MASKYRGYYHDEASSAAGGGGGGGGGDGYRREKQVRKKRLT) is disordered. Residues 17-27 (AGGGGGGGGGD) show a composition bias toward gly residues. 4 EF-hand domains span residues 43 to 78 (QKRK…LGFE), 79 to 114 (MTPE…KMGE), 116 to 151 (DARE…TGEP), and 152 to 187 (FTLD…IGFG). Ca(2+) contacts are provided by Asp-56, Asp-58, Ser-60, Thr-62, Glu-67, Asp-92, Asp-94, Ser-96, Thr-98, Glu-103, Asp-129, Asp-131, Asn-133, Lys-135, Asp-140, Asp-165, Asn-167, Asp-169, Glu-171, and Glu-176.

Functionally, potential calcium sensor. The polypeptide is Probable calcium-binding protein CML8 (CML8) (Oryza sativa subsp. japonica (Rice)).